We begin with the raw amino-acid sequence, 126 residues long: Non-specific lipid-transfer protein 13 (126 aa).

A signal peptide spans 1–20 (MDTHTTKLVAISLLLLLVIS). 4 disulfide bridges follow: Cys-36/Cys-85, Cys-46/Cys-61, Cys-62/Cys-109, and Cys-83/Cys-123.

Belongs to the plant LTP family.

Functionally, plant non-specific lipid-transfer proteins transfer phospholipids as well as galactolipids across membranes. May play a role in wax or cutin deposition in the cell walls of expanding epidermal cells and certain secretory tissues. The sequence is that of Non-specific lipid-transfer protein 13 (LTP13) from Arabidopsis thaliana (Mouse-ear cress).